Consider the following 226-residue polypeptide: Octanoyltransferase (226 aa).

In terms of domain architecture, BPL/LPL catalytic spans Leu34 to Phe212. Substrate contacts are provided by residues Arg76–His83, Ala143–Gly145, and Gly156–Ala158. The active-site Acyl-thioester intermediate is the Cys174.

This sequence belongs to the LipB family.

It localises to the cytoplasm. It carries out the reaction octanoyl-[ACP] + L-lysyl-[protein] = N(6)-octanoyl-L-lysyl-[protein] + holo-[ACP] + H(+). The protein operates within protein modification; protein lipoylation via endogenous pathway; protein N(6)-(lipoyl)lysine from octanoyl-[acyl-carrier-protein]: step 1/2. In terms of biological role, catalyzes the transfer of endogenously produced octanoic acid from octanoyl-acyl-carrier-protein onto the lipoyl domains of lipoate-dependent enzymes. Lipoyl-ACP can also act as a substrate although octanoyl-ACP is likely to be the physiological substrate. The polypeptide is Octanoyltransferase (Thermosynechococcus vestitus (strain NIES-2133 / IAM M-273 / BP-1)).